The following is a 959-amino-acid chain: DNA polymerase 1 (959 aa).

Residues methionine 1–glutamate 110 are disordered. The span at lysine 44–serine 60 shows a compositional bias: basic and acidic residues.

It belongs to the DNA polymerase type-B family.

The catalysed reaction is DNA(n) + a 2'-deoxyribonucleoside 5'-triphosphate = DNA(n+1) + diphosphate. In Aeropyrum pernix (strain ATCC 700893 / DSM 11879 / JCM 9820 / NBRC 100138 / K1), this protein is DNA polymerase 1 (polA).